The chain runs to 1014 residues: Probable transport protein MmpL11 (1014 aa).

Helical transmembrane passes span 13–33, 156–173, 188–208, 235–255, 279–299, 311–331, 373–393, 530–550, 560–580, 598–618, 649–669, and 671–691; these read WLVF…AMTQ, VRLY…VAAN, IILI…VPLA, TSTV…FILM, GLAV…IYLI, AILA…AALA, ASAA…MMLG, TEPL…LISI, VLMT…VFQW, VPPL…IFLL, AALI…PLVA, and IGVA…LVLV. The segment at 783–802 is disordered; sequence SDRVLPGAATQESEEDPAMG.

This sequence belongs to the resistance-nodulation-cell division (RND) (TC 2.A.6) family. MmpL subfamily.

The protein resides in the cell membrane. The protein is Probable transport protein MmpL11 (mmpL11) of Mycobacterium leprae (strain TN).